A 467-amino-acid polypeptide reads, in one-letter code: Asparagine--tRNA ligase (467 aa).

It belongs to the class-II aminoacyl-tRNA synthetase family. As to quaternary structure, homodimer.

The protein localises to the cytoplasm. It catalyses the reaction tRNA(Asn) + L-asparagine + ATP = L-asparaginyl-tRNA(Asn) + AMP + diphosphate + H(+). This chain is Asparagine--tRNA ligase, found in Legionella pneumophila (strain Lens).